An 819-amino-acid chain; its full sequence is Protein EFR3 homolog A (819 aa).

Residues S360, S363, S420, and S692 each carry the phosphoserine modification.

This sequence belongs to the EFR3 family. Component of a phosphatidylinositol 4-kinase (PI4K) complex, composed of PI4KA, EFR3 (EFR3A or EFR3B), TTC7 (TTC7A or TTC7B) and HYCC (HYCC1 or HYCC2). In terms of processing, palmitoylated at its N-terminus, anchoring the protein to the plasma membrane. As to expression, widely expressed. Expressed in neurons of the superior olivary complex of the auditory brainstem. Also expressed at lower levels in the cochlear nucleus, the lateral leminiscal nuclei and the inferior collicus.

It is found in the cell membrane. The protein localises to the cytoplasm. The protein resides in the cytosol. In terms of biological role, component of a complex required to localize phosphatidylinositol 4-kinase (PI4K) to the plasma membrane. The complex acts as a regulator of phosphatidylinositol 4-phosphate (PtdIns(4)P) synthesis. In the complex, EFR3A probably acts as the membrane-anchoring component. Also involved in responsiveness to G-protein-coupled receptors; it is however unclear whether this role is direct or indirect. This is Protein EFR3 homolog A from Mus musculus (Mouse).